Consider the following 272-residue polypeptide: 3-methyl-2-oxobutanoate hydroxymethyltransferase (272 aa).

Mg(2+) is bound by residues Asp-54 and Asp-93. Residues Asp-54 to Ser-55, Asp-93, and Lys-123 each bind 3-methyl-2-oxobutanoate. Residue Glu-125 participates in Mg(2+) binding. Glu-190 (proton acceptor) is an active-site residue.

The protein belongs to the PanB family. As to quaternary structure, homodecamer; pentamer of dimers. It depends on Mg(2+) as a cofactor.

It is found in the cytoplasm. It carries out the reaction 3-methyl-2-oxobutanoate + (6R)-5,10-methylene-5,6,7,8-tetrahydrofolate + H2O = 2-dehydropantoate + (6S)-5,6,7,8-tetrahydrofolate. It participates in cofactor biosynthesis; (R)-pantothenate biosynthesis; (R)-pantoate from 3-methyl-2-oxobutanoate: step 1/2. Its function is as follows. Catalyzes the reversible reaction in which hydroxymethyl group from 5,10-methylenetetrahydrofolate is transferred onto alpha-ketoisovalerate to form ketopantoate. This is 3-methyl-2-oxobutanoate hydroxymethyltransferase from Tropheryma whipplei (strain Twist) (Whipple's bacillus).